The sequence spans 115 residues: Protein Rev (115 aa).

Phosphoserine; by host CK2 is present on residues Ser-5 and Ser-8. The segment at 18–26 (LIKFLYQSN) is homomultimerization. The tract at residues 23-48 (YQSNPPPSSEGTRQARRNRRRRWRER) is disordered. Residues 34–50 (TRQARRNRRRRWRERQR) carry the Nuclear localization signal and RNA-binding (RRE) motif. Residues 36-48 (QARRNRRRRWRER) are compositionally biased toward basic residues. The short motif at 73–83 (LQLPPQRLTLD) is the Nuclear export signal and binding to XPO1 element. A disordered region spans residues 89-115 (GTSGTQGVGSPQILVESPTVLESGTKE). Ser-91 and Ser-98 each carry phosphoserine; by host.

Belongs to the HIV-1 REV protein family. Homomultimer; when bound to the RRE. Multimeric assembly is essential for activity and may involve XPO1. Binds to human KPNB1, XPO1, TNPO1, RANBP5 and IPO7. Interacts with the viral Integrase. Interacts with human KHDRBS1. Interacts with human NAP1; this interaction decreases Rev multimerization and stimulates its activity. Interacts with human DEAD-box helicases DDX3 and DDX24; these interactions may serve for viral RNA export to the cytoplasm and packaging, respectively. Interacts with human PSIP1; this interaction may inhibit HIV-1 DNA integration by promoting dissociation of the Integrase-LEDGF/p75 complex. Asymmetrically arginine dimethylated at one site by host PRMT6. Methylation impairs the RNA-binding activity and export of viral RNA from the nucleus to the cytoplasm. Post-translationally, phosphorylated by protein kinase CK2. Presence of, and maybe binding to the N-terminus of the regulatory beta subunit of CK2 is necessary for CK2-mediated Rev's phosphorylation.

The protein localises to the host nucleus. It is found in the host nucleolus. The protein resides in the host cytoplasm. Escorts unspliced or incompletely spliced viral pre-mRNAs (late transcripts) out of the nucleus of infected cells. These pre-mRNAs carry a recognition sequence called Rev responsive element (RRE) located in the env gene, that is not present in fully spliced viral mRNAs (early transcripts). This function is essential since most viral proteins are translated from unspliced or partially spliced pre-mRNAs which cannot exit the nucleus by the pathway used by fully processed cellular mRNAs. Rev itself is translated from a fully spliced mRNA that readily exits the nucleus. Rev's nuclear localization signal (NLS) binds directly to KPNB1/Importin beta-1 without previous binding to KPNA1/Importin alpha-1. KPNB1 binds to the GDP bound form of RAN (Ran-GDP) and targets Rev to the nucleus. In the nucleus, the conversion from Ran-GDP to Ran-GTP dissociates Rev from KPNB1 and allows Rev's binding to the RRE in viral pre-mRNAs. Rev multimerization on the RRE via cooperative assembly exposes its nuclear export signal (NES) to the surface. Rev can then form a complex with XPO1/CRM1 and Ran-GTP, leading to nuclear export of the complex. Conversion from Ran-GTP to Ran-GDP mediates dissociation of the Rev/RRE/XPO1/RAN complex, so that Rev can return to the nucleus for a subsequent round of export. Beside KPNB1, also seems to interact with TNPO1/Transportin-1, RANBP5/IPO5 and IPO7/RANBP7 for nuclear import. The nucleoporin-like HRB/RIP is an essential cofactor that probably indirectly interacts with Rev to release HIV RNAs from the perinuclear region to the cytoplasm. The chain is Protein Rev from Human immunodeficiency virus type 1 group M subtype B (isolate MN) (HIV-1).